Here is a 255-residue protein sequence, read N- to C-terminus: MKNNQEYILVVDIGNSYTKIGIFEKEKENTTSIILFPTDSETNIATLSKKMNVFKKYNIKHSIVGSVVPKLKPTYFKTIKKMFNIEPYYISETTKYSFLIDESPNKELGDDLKALCEYCVSVNKNCIGISFGTAIASVYLKNNSLVGASIAAGLGFGLNKLIEKASLLKKSKIDKFSSDFFGTNTISALESGINNLRSGFAYNFYNQAKKDNLNSDLKCIITGGESYNINISSFEYEINKEAILLGFKKIYFLNN.

12–19 is a binding site for ATP; that stretch reads DIGNSYTK. 109–112 contributes to the substrate binding site; sequence GDDL. The active-site Proton acceptor is Asp111. Position 133 (Thr133) interacts with ATP. Thr185 is a substrate binding site.

It belongs to the type III pantothenate kinase family. In terms of assembly, homodimer. It depends on NH4(+) as a cofactor. The cofactor is K(+).

Its subcellular location is the cytoplasm. The catalysed reaction is (R)-pantothenate + ATP = (R)-4'-phosphopantothenate + ADP + H(+). The protein operates within cofactor biosynthesis; coenzyme A biosynthesis; CoA from (R)-pantothenate: step 1/5. Its function is as follows. Catalyzes the phosphorylation of pantothenate (Pan), the first step in CoA biosynthesis. The sequence is that of Type III pantothenate kinase from Malacoplasma penetrans (strain HF-2) (Mycoplasma penetrans).